The chain runs to 276 residues: 3-methyl-2-oxobutanoate hydroxymethyltransferase (276 aa).

Residues D44 and D83 each coordinate Mg(2+). 3-methyl-2-oxobutanoate is bound by residues 44 to 45 (DS), D83, and K113. E115 provides a ligand contact to Mg(2+). Residue E182 is the Proton acceptor of the active site.

Belongs to the PanB family. As to quaternary structure, homodecamer; pentamer of dimers. The cofactor is Mg(2+).

The protein resides in the cytoplasm. It catalyses the reaction 3-methyl-2-oxobutanoate + (6R)-5,10-methylene-5,6,7,8-tetrahydrofolate + H2O = 2-dehydropantoate + (6S)-5,6,7,8-tetrahydrofolate. It functions in the pathway cofactor biosynthesis; (R)-pantothenate biosynthesis; (R)-pantoate from 3-methyl-2-oxobutanoate: step 1/2. Catalyzes the reversible reaction in which hydroxymethyl group from 5,10-methylenetetrahydrofolate is transferred onto alpha-ketoisovalerate to form ketopantoate. The polypeptide is 3-methyl-2-oxobutanoate hydroxymethyltransferase (Clostridium acetobutylicum (strain ATCC 824 / DSM 792 / JCM 1419 / IAM 19013 / LMG 5710 / NBRC 13948 / NRRL B-527 / VKM B-1787 / 2291 / W)).